Here is a 394-residue protein sequence, read N- to C-terminus: uncharacterized protein (394 aa).

S117 and S121 each carry phosphoserine. Disordered stretches follow at residues 177–295, 315–347, and 370–394; these read DSDE…PGTF, KRSI…GSLS, and SSEV…AHRV. Over residues 178–190 the composition is skewed to acidic residues; it reads SDEEDEVDDEEIE. Polar residues-rich tracts occupy residues 191 to 207 and 216 to 230; these read SFNS…NSRY and EKQS…VSQI. Composition is skewed to acidic residues over residues 231–263 and 284–295; these read SDDE…DDED and IPDDTDFVPGTF. Positions 370–379 are enriched in polar residues; the sequence is SSEVLRNSKS. S379 carries the phosphoserine modification.

It localises to the nucleus. This is an uncharacterized protein from Schizosaccharomyces pombe (strain 972 / ATCC 24843) (Fission yeast).